Here is a 198-residue protein sequence, read N- to C-terminus: Large ribosomal subunit protein eL19 (198 aa).

2 disordered regions span residues 66–85 (YEEA…RGTA) and 150–177 (KRAK…EERQ). The segment covering 71–83 (RKGRHTGYGKRRG) has biased composition (basic residues). The span at 160–177 (QARRDKNKESRKRREERQ) shows a compositional bias: basic and acidic residues.

The protein belongs to the eukaryotic ribosomal protein eL19 family.

In Caenorhabditis elegans, this protein is Large ribosomal subunit protein eL19 (rpl-19).